The primary structure comprises 1139 residues: Protein lin-25 (1139 aa).

Positions 695–701 (IKKKKDP) match the Nuclear localization signal motif.

In terms of tissue distribution, expressed in seam cells and all six vulva precursor cells (VPC). After VPC division, expression is restricted to descendants of the VPC cell lineages P5.p, P6.p and P7.p (at protein level).

It is found in the nucleus. The protein localises to the cytoplasm. In terms of biological role, participates in the inductive signaling pathway downstream of let-60 Ras and the RAF/MAP kinase cascade to regulate specification and differentiation of many cell types. Positively regulates the fate of vulval precursor cells. Required for induction of the P12 and excretory duct cell fates. In males, it is also required for proper formation of spicules. Does not function in the signaling pathway that promotes exit from pachytene. Plays a role in responses to M.nematophilum-mediated bacterial infection by promoting tail swelling and preventing constipation. The sequence is that of Protein lin-25 (lin-25) from Caenorhabditis elegans.